Here is a 1405-residue protein sequence, read N- to C-terminus: DNA-directed RNA polymerase subunit beta' (1405 aa).

Positions 70, 72, 85, and 88 each coordinate Zn(2+). Asp-460, Asp-462, and Asp-464 together coordinate Mg(2+). Zn(2+) is bound by residues Cys-815, Cys-890, Cys-897, and Cys-900.

This sequence belongs to the RNA polymerase beta' chain family. As to quaternary structure, the RNAP catalytic core consists of 2 alpha, 1 beta, 1 beta' and 1 omega subunit. When a sigma factor is associated with the core the holoenzyme is formed, which can initiate transcription. Requires Mg(2+) as cofactor. It depends on Zn(2+) as a cofactor.

The catalysed reaction is RNA(n) + a ribonucleoside 5'-triphosphate = RNA(n+1) + diphosphate. DNA-dependent RNA polymerase catalyzes the transcription of DNA into RNA using the four ribonucleoside triphosphates as substrates. This Xanthomonas campestris pv. campestris (strain B100) protein is DNA-directed RNA polymerase subunit beta'.